We begin with the raw amino-acid sequence, 339 residues long: D-erythrose-4-phosphate dehydrogenase (339 aa).

NAD(+)-binding positions include R12–I13 and R81. Substrate-binding positions include S154 to T156, R200, T213 to K214, and R236. The active-site Nucleophile is the C155. An NAD(+)-binding site is contributed by N318.

The protein belongs to the glyceraldehyde-3-phosphate dehydrogenase family. Epd subfamily. Homotetramer.

The protein resides in the cytoplasm. The catalysed reaction is D-erythrose 4-phosphate + NAD(+) + H2O = 4-phospho-D-erythronate + NADH + 2 H(+). The protein operates within cofactor biosynthesis; pyridoxine 5'-phosphate biosynthesis; pyridoxine 5'-phosphate from D-erythrose 4-phosphate: step 1/5. Its function is as follows. Catalyzes the NAD-dependent conversion of D-erythrose 4-phosphate to 4-phosphoerythronate. The sequence is that of D-erythrose-4-phosphate dehydrogenase from Escherichia coli O45:K1 (strain S88 / ExPEC).